The primary structure comprises 333 residues: tRNA(Ile)-lysidine synthase (333 aa).

33–38 (SGGADS) contacts ATP.

It belongs to the tRNA(Ile)-lysidine synthase family.

It localises to the cytoplasm. It carries out the reaction cytidine(34) in tRNA(Ile2) + L-lysine + ATP = lysidine(34) in tRNA(Ile2) + AMP + diphosphate + H(+). Functionally, ligates lysine onto the cytidine present at position 34 of the AUA codon-specific tRNA(Ile) that contains the anticodon CAU, in an ATP-dependent manner. Cytidine is converted to lysidine, thus changing the amino acid specificity of the tRNA from methionine to isoleucine. The polypeptide is tRNA(Ile)-lysidine synthase (Salinispora arenicola (strain CNS-205)).